Consider the following 212-residue polypeptide: Metalloproteinase inhibitor 3 (212 aa).

The signal sequence occupies residues 1–24 (MTAWLGFLAVFLCSWSLRDLVAEA). Residue C25 coordinates Zn(2+). Involved in metalloproteinase-binding regions lie at residues 25-28 (CTCV) and 89-90 (ES). 6 disulfide bridges follow: C25–C92, C27–C119, C37–C144, C146–C193, C151–C156, and C164–C185. Residues 25-144 (CTCVPIHPQD…GLNHRYHLGC (120 aa)) enclose the NTR domain.

The protein belongs to the protease inhibitor I35 (TIMP) family.

It localises to the secreted. The protein resides in the extracellular space. It is found in the extracellular matrix. Functionally, complexes with metalloproteinases (such as collagenases) and irreversibly inactivates them by binding to their catalytic zinc cofactor. May form part of a tissue-specific acute response to remodeling stimuli. In Gallus gallus (Chicken), this protein is Metalloproteinase inhibitor 3 (TIMP3).